The sequence spans 216 residues: MOB kinase activator 3C (216 aa).

Residues Cys-82, Cys-87, His-164, and His-169 each contribute to the Zn(2+) site.

The protein belongs to the MOB1/phocein family.

In terms of biological role, may regulate the activity of kinases. The sequence is that of MOB kinase activator 3C (MOB3C) from Bos taurus (Bovine).